Here is a 351-residue protein sequence, read N- to C-terminus: Cell shape-determining protein MreB (351 aa).

ATP-binding positions include 20–22 (TAN), 169–171 (GGT), 217–220 (ERIK), and 299–302 (GGAL).

The protein belongs to the FtsA/MreB family. As to quaternary structure, forms polymers.

The protein localises to the cytoplasm. In terms of biological role, forms membrane-associated dynamic filaments that are essential for cell shape determination. Acts by regulating cell wall synthesis and cell elongation, and thus cell shape. A feedback loop between cell geometry and MreB localization may maintain elongated cell shape by targeting cell wall growth to regions of negative cell wall curvature. The sequence is that of Cell shape-determining protein MreB from Haemophilus influenzae (strain ATCC 51907 / DSM 11121 / KW20 / Rd).